A 231-amino-acid chain; its full sequence is Putative cobalt transport protein CbiM 2 (231 aa).

6 helical membrane passes run 8–28 (LPIG…IYGI), 41–61 (VLPL…LKIP), 75–95 (LSAA…VLLF), 108–128 (LGAN…LVFV), 136–156 (VGIG…TYTV), and 176–196 (IAFA…EGII).

The protein belongs to the CbiM family. As to quaternary structure, forms an energy-coupling factor (ECF) transporter complex composed of an ATP-binding protein (A component, CbiO), a transmembrane protein (T component, CbiQ) and 2 possible substrate-capture proteins (S components, CbiM and CbiN) of unknown stoichimetry.

The protein localises to the cell membrane. The protein operates within cofactor biosynthesis; adenosylcobalamin biosynthesis. In terms of biological role, part of the energy-coupling factor (ECF) transporter complex CbiMNOQ involved in cobalt import. The chain is Putative cobalt transport protein CbiM 2 from Methanocorpusculum labreanum (strain ATCC 43576 / DSM 4855 / Z).